The primary structure comprises 85 residues: Small ribosomal subunit protein bS16 (85 aa).

Belongs to the bacterial ribosomal protein bS16 family.

The protein is Small ribosomal subunit protein bS16 of Rubrobacter xylanophilus (strain DSM 9941 / JCM 11954 / NBRC 16129 / PRD-1).